Here is a 316-residue protein sequence, read N- to C-terminus: Neutrophil-stimulating factor 1 (316 aa).

An N-terminal signal peptide occupies residues 1–21 (METSLPITVVFLIVLITGAQT). Residues 126-316 (HGEMLERMTA…WFAVSWNDRG (191 aa)) are involved in interaction with human CD47. N-linked (GlcNAc...) asparagine glycosylation occurs at N169.

Interacts with human CD4. Interacts with human CD47; the interaction results in inhibition of phagocytosis activity of host macrophages. As to expression, female salivary gland (at protein level). Saliva (at protein level). Some expression in ovary and midgut (at protein level).

It is found in the secreted. In terms of biological role, activates host neutrophils; induces expression of IL1B and CXCL2 at the bite site. Promotes activation of human CD4(+) T-cells. Inhibits phagocytosis activity of host macrophages via the interaction with CD47 receptor on their surface. Suppresses expression of pro-inflammatory cytokines, such as IFN-gamma/IFNG, IL2, TNF-alpha/TNF, IL12B, IL8/CXCL8, IL6, in host white blood cells. Reduces host polymorphonuclear neutrophil chemotaxis induced by N-formylmethionine-leucylphenylalanine (fMLF). Reduces CD11b/ITGAM expression in fMLF-induced host polymorphonuclear neutrophils. Functionally, (Microbial infection) Enhances early replication of Zika virus in the host. In Aedes aegypti (Yellowfever mosquito), this protein is Neutrophil-stimulating factor 1.